The primary structure comprises 86 residues: Small ribosomal subunit protein bS16 (86 aa).

It belongs to the bacterial ribosomal protein bS16 family.

The polypeptide is Small ribosomal subunit protein bS16 (Xylella fastidiosa (strain 9a5c)).